We begin with the raw amino-acid sequence, 430 residues long: Glial fibrillary acidic protein (430 aa).

Residues 1-69 (MERRRITSAR…KETRASERAE (69 aa)) are head. Threonine 7 carries the phosphothreonine; by AURKB and ROCK1 modification. An Omega-N-methylarginine modification is found at arginine 11. A Phosphoserine; by AURKB and ROCK1 modification is found at serine 12. An Omega-N-methylarginine modification is found at arginine 20. Position 33 is a citrulline (arginine 33). Residue serine 35 is modified to Phosphoserine; by AURKB and ROCK1. A Phosphothreonine modification is found at threonine 40. The region spanning 66–374 (ERAEMMELND…KLLEGEENRI (309 aa)) is the IF rod domain. The coil 1A stretch occupies residues 70–101 (MMELNDRFASYIEKVRFLEQQNKALAAELNQL). Position 79 is a phosphoserine (serine 79). A linker 1 region spans residues 102-112 (RAKEPTKLADV). 2 positions are modified to phosphothreonine: threonine 107 and threonine 147. The tract at residues 113-211 (YQAELRELRL…EEEVRELREQ (99 aa)) is coil 1B. Residues 212-227 (LAQQQVHVEMDVAKPD) are linker 12. The tract at residues 228-249 (LTAALREIRTQYEAVATSNMQE) is coil 2A. The tract at residues 250–253 (TEEW) is linker 2. The coil 2B stretch occupies residues 254–374 (YRSKFADLTD…KLLEGEENRI (121 aa)). A Phosphoserine modification is found at serine 266. Arginine 267 bears the Citrulline mark. Serine 320 carries the phosphoserine modification. Residues 375 to 430 (TIPVQTFSNLQIRETSLDTKSVSEGHLKRNIVVKTVEMRDGEVIKDSKQEHKDVVM) are tail. Threonine 380 is modified (phosphothreonine). Position 382 is a phosphoserine (serine 382). A citrulline mark is found at arginine 403 and arginine 413.

This sequence belongs to the intermediate filament family. In terms of assembly, interacts with SYNM. As to quaternary structure, interacts with PSEN1 (via N-terminus). Post-translationally, phosphorylated by PKN1. As to expression, brain; isoform 2 expressed at 20-fold lower level than isoform 1.

The protein localises to the cytoplasm. Functionally, GFAP, a class-III intermediate filament, is a cell-specific marker that, during the development of the central nervous system, distinguishes astrocytes from other glial cells. In Mus musculus (Mouse), this protein is Glial fibrillary acidic protein (Gfap).